The sequence spans 901 residues: Probable inorganic carbon transporter subunit DabA (901 aa).

Cys424, Asp426, His606, and Cys621 together coordinate Zn(2+).

The protein belongs to the inorganic carbon transporter (TC 9.A.2) DabA family. Forms a complex with DabB. Zn(2+) is required as a cofactor.

The protein localises to the cell membrane. Part of an energy-coupled inorganic carbon pump. The polypeptide is Probable inorganic carbon transporter subunit DabA (Staphylococcus aureus (strain NCTC 8325 / PS 47)).